The primary structure comprises 391 residues: Phosphoglycerate kinase (391 aa).

Substrate-binding positions include 21–23 (DFN), arginine 36, 59–62 (HLGR), arginine 113, and arginine 146. ATP is bound by residues lysine 197, glutamate 319, and 345 to 348 (GGDT).

Belongs to the phosphoglycerate kinase family. In terms of assembly, monomer.

The protein resides in the cytoplasm. It carries out the reaction (2R)-3-phosphoglycerate + ATP = (2R)-3-phospho-glyceroyl phosphate + ADP. Its pathway is carbohydrate degradation; glycolysis; pyruvate from D-glyceraldehyde 3-phosphate: step 2/5. In Methylococcus capsulatus (strain ATCC 33009 / NCIMB 11132 / Bath), this protein is Phosphoglycerate kinase.